Reading from the N-terminus, the 174-residue chain is Calcineurin subunit B (174 aa).

4 EF-hand domains span residues 21–56 (EEIE…ASNP), 60–88 (RLFS…FSVH), 90–125 (NKEE…MVGT), and 131–166 (QLQQ…SNVT). Positions 34, 36, 38, 40, 45, 66, 68, 72, 77, 103, 105, 107, 109, 114, 144, 146, 148, 150, and 155 each coordinate Ca(2+).

This sequence belongs to the calcineurin regulatory subunit family. In terms of assembly, composed of a catalytic subunit (A) and a regulatory subunit (B).

Functionally, regulatory subunit of calcineurin, a calcium-dependent, calmodulin stimulated protein phosphatase. Confers calcium sensitivity. In Schizosaccharomyces pombe (strain 972 / ATCC 24843) (Fission yeast), this protein is Calcineurin subunit B (cnb1).